Here is a 143-residue protein sequence, read N- to C-terminus: Lutropin subunit beta (143 aa).

The first 22 residues, 1-22 (MEMLQGLLLLWLLLLNVGGVWT), serve as a signal peptide directing secretion. Cystine bridges form between Cys-31-Cys-79, Cys-45-Cys-94, Cys-48-Cys-132, Cys-56-Cys-110, Cys-60-Cys-112, and Cys-115-Cys-122. N-linked (GlcNAc...) asparagine glycosylation occurs at Asn-35.

Belongs to the glycoprotein hormones subunit beta family. Heterodimer of a common alpha chain and a unique beta chain which confers biological specificity to thyrotropin, lutropin, follitropin and gonadotropin.

Its subcellular location is the secreted. Promotes spermatogenesis and ovulation by stimulating the testes and ovaries to synthesize steroids. This Felis catus (Cat) protein is Lutropin subunit beta (LHB).